A 214-amino-acid chain; its full sequence is NAD(P)H-quinone oxidoreductase subunit 5, chloroplastic (214 aa).

2 helical membrane passes run 84–104 (LFPL…GIPF) and 152–172 (SLAI…YSFF).

This sequence belongs to the complex I subunit 5 family. As to quaternary structure, NDH is composed of at least 16 different subunits, 5 of which are encoded in the nucleus.

The protein resides in the plastid. It is found in the chloroplast thylakoid membrane. The catalysed reaction is a plastoquinone + NADH + (n+1) H(+)(in) = a plastoquinol + NAD(+) + n H(+)(out). It carries out the reaction a plastoquinone + NADPH + (n+1) H(+)(in) = a plastoquinol + NADP(+) + n H(+)(out). Its function is as follows. NDH shuttles electrons from NAD(P)H:plastoquinone, via FMN and iron-sulfur (Fe-S) centers, to quinones in the photosynthetic chain and possibly in a chloroplast respiratory chain. The immediate electron acceptor for the enzyme in this species is believed to be plastoquinone. Couples the redox reaction to proton translocation, and thus conserves the redox energy in a proton gradient. This is NAD(P)H-quinone oxidoreductase subunit 5, chloroplastic (ndhF) from Brachypodium pinnatum (Tor grass).